The following is a 180-amino-acid chain: Large ribosomal subunit protein uL5 (180 aa).

This sequence belongs to the universal ribosomal protein uL5 family. As to quaternary structure, part of the 50S ribosomal subunit; part of the 5S rRNA/L5/L18/L25 subcomplex. Contacts the 5S rRNA and the P site tRNA. Forms a bridge to the 30S subunit in the 70S ribosome.

Its function is as follows. This is one of the proteins that bind and probably mediate the attachment of the 5S RNA into the large ribosomal subunit, where it forms part of the central protuberance. In the 70S ribosome it contacts protein S13 of the 30S subunit (bridge B1b), connecting the 2 subunits; this bridge is implicated in subunit movement. Contacts the P site tRNA; the 5S rRNA and some of its associated proteins might help stabilize positioning of ribosome-bound tRNAs. The sequence is that of Large ribosomal subunit protein uL5 from Clostridium acetobutylicum (strain ATCC 824 / DSM 792 / JCM 1419 / IAM 19013 / LMG 5710 / NBRC 13948 / NRRL B-527 / VKM B-1787 / 2291 / W).